Consider the following 509-residue polypeptide: Zinc metalloproteinase aureolysin (509 aa).

An N-terminal signal peptide occupies residues 1-27 (MRKFSRYAFTSMATVTLLSSLTPAALA). Residues 28-208 (SDTNHKPATS…VVEKTNLVKE (181 aa)) constitute a propeptide that is removed on maturation. Aspartate 348 serves as a coordination point for Ca(2+). A Zn(2+)-binding site is contributed by histidine 352. Glutamate 353 is a catalytic residue. Residues histidine 356 and glutamate 376 each coordinate Zn(2+). Ca(2+) contacts are provided by aspartate 387, glutamate 389, aspartate 390, leucine 392, glutamate 395, tyrosine 398, threonine 399, lysine 402, and aspartate 405. Histidine 436 functions as the Proton donor in the catalytic mechanism.

It belongs to the peptidase M4 family. Monomer. Ca(2+) is required as a cofactor. It depends on Zn(2+) as a cofactor.

The enzyme catalyses Cleavage of insulin B chain with specificity similar to that of thermolysin, preferring hydrophobic P1' residues. Activates the glutamyl endopeptidase (EC 3.4.21.19) of Staphylococcus aureus.. Plays an essential role in immune evasion by helping bacteria to resist complement-mediated killing by neutrophils. Inhibits the deposition of host C3b on bacterial surfaces and the release of the chemoattractant C5a by cleaving the central complement protein C3. The cleavage site renders the C3b molecule vulnerable to proteolytic degradation by host regulators. Cleaves and inactivates host SERPINA1, which is an endogenous protease inhibitor essential for controlling neutrophil serine protease elastase. Also plays an essential role in the cleavage and subsequent activation of the serine protease SspA (glutamyl endopeptidase) which is involved in colonization and infection of human tissues. This Staphylococcus aureus protein is Zinc metalloproteinase aureolysin.